A 581-amino-acid polypeptide reads, in one-letter code: FAD-dependent monooxygenase DEP4 (581 aa).

43 to 46 (VWSK) is an FAD binding site. 54–56 (FAQ) provides a ligand contact to NADP(+). Val108 lines the FAD pocket. Residues 183–202 (VGRS…EGKR), 219–220 (AP), and 351–352 (DI) each bind NADP(+). Met470 is a binding site for FAD.

It belongs to the FAD-binding monooxygenase family. FAD is required as a cofactor.

It functions in the pathway polyketide biosynthesis. Functionally, FAD-dependent monooxygenase; part of the gene cluster that mediates the biosynthesis of depudecin, a highly oxidized eleven-carbon linear polyketide that acts as a histone deacetylase (HDAC) inhibitor and makes a small contribution to pathogenesis. The reducing polyketide synthase DEP5 is the central enzyme in depudecin biosynthesis by yielding the backbone polyketide chain. The monooxygenases DEP2 and DEP4, as well as the uncharacterized protein DEP1, then act as tailoring enzymes to modify the intermediate polyketide chain into depudecin. The polypeptide is FAD-dependent monooxygenase DEP4 (Alternaria brassicicola (Dark leaf spot agent)).